We begin with the raw amino-acid sequence, 686 residues long: DNA ligase (686 aa).

Residues Asp34 to Asp38, Ser83 to Ile84, and Glu120 contribute to the NAD(+) site. The active-site N6-AMP-lysine intermediate is the Lys122. Arg143, Glu180, Lys298, and Lys322 together coordinate NAD(+). Zn(2+) contacts are provided by Cys420, Cys423, Cys438, and Cys444. The BRCT domain occupies Gln603–Gly686.

Belongs to the NAD-dependent DNA ligase family. LigA subfamily. Mg(2+) serves as cofactor. Requires Mn(2+) as cofactor.

It carries out the reaction NAD(+) + (deoxyribonucleotide)n-3'-hydroxyl + 5'-phospho-(deoxyribonucleotide)m = (deoxyribonucleotide)n+m + AMP + beta-nicotinamide D-nucleotide.. In terms of biological role, DNA ligase that catalyzes the formation of phosphodiester linkages between 5'-phosphoryl and 3'-hydroxyl groups in double-stranded DNA using NAD as a coenzyme and as the energy source for the reaction. It is essential for DNA replication and repair of damaged DNA. The chain is DNA ligase from Thiobacillus denitrificans (strain ATCC 25259 / T1).